A 381-amino-acid chain; its full sequence is GDP-mannose transporter (381 aa).

At 1-40 the chain is on the cytoplasmic side; the sequence is MADDKKTNDYTVEMDKLDQGSKNFEAPLPPVQPRSAPNAQ. A helical transmembrane segment spans residues 41-61; the sequence is LANNPILPVLAYCGSSIMMTV. At 62-71 the chain is on the lumenal side; the sequence is MNKYVLSGTD. The chain crosses the membrane as a helical span at residues 72 to 92; sequence FNLNFLLLCVQSIVCIVAIQT. Topologically, residues 93-110 are cytoplasmic; that stretch reads CKASKLITYRDFNADEAK. Residues 111–127 form a helical membrane-spanning segment; it reads KWFPITLLLIGMIYTGS. Topologically, residues 128–134 are lumenal; the sequence is KALQFLS. The chain crosses the membrane as a helical span at residues 135–151; it reads IPVYTIFKNLTIILIAY. Over 152-160 the chain is Cytoplasmic; that stretch reads GEVLWFGGS. Residues 161 to 182 form a helical membrane-spanning segment; that stretch reads VTGLTLFSFGLMVLSSIIAAWA. Over 183 to 200 the chain is Lumenal; it reads DIKHAVESSGDATAKVST. The chain crosses the membrane as a helical span at residues 201 to 221; the sequence is LNAGYIWMLINCLCTSSYVLG. Residues 222 to 233 are Cytoplasmic-facing; the sequence is MRKRIKLTNFKD. A helical transmembrane segment spans residues 234 to 254; sequence FDTMFYNNLLSIPVLLVLTFL. The Lumenal portion of the chain corresponds to 255 to 274; sequence MEDWSSANITRNFPPADRNG. N-linked (GlcNAc...) asparagine glycosylation is present at asparagine 262. The chain crosses the membrane as a helical span at residues 275–295; it reads IMFAMILSGLSSVFISYTSAW. Topologically, residues 296 to 303 are cytoplasmic; that stretch reads CVRVTSST. Residues 304–324 traverse the membrane as a helical segment; that stretch reads TYSMVGALNKLPIAVSGLIFF. At 325-327 the chain is on the lumenal side; the sequence is DAP. A helical membrane pass occupies residues 328 to 348; sequence VTFPSVSAIVVGFVSGIVYAV. Over 349–381 the chain is Cytoplasmic; that stretch reads AKIKQNAKPKTGVLPTSNPVSASSQSMRDSLRS. Residues 362-381 are disordered; sequence LPTSNPVSASSQSMRDSLRS.

The protein belongs to the TPT transporter family. SLC35D subfamily. In terms of assembly, homooligomer.

The protein resides in the golgi apparatus membrane. The protein localises to the cytoplasmic vesicle membrane. Its subcellular location is the endoplasmic reticulum membrane. Functionally, involved in the import of GDP-mannose from the cytoplasm into the Golgi lumen. This Aspergillus clavatus (strain ATCC 1007 / CBS 513.65 / DSM 816 / NCTC 3887 / NRRL 1 / QM 1276 / 107) protein is GDP-mannose transporter (gmt1).